The primary structure comprises 649 residues: Lysophospholipase (649 aa).

The N-terminal stretch at 1-21 (MNLKEWLLFSDAVFFAQGTLA) is a signal peptide. N-linked (GlcNAc...) asparagine glycosylation is found at Asn-32, Asn-51, Asn-77, Asn-90, Asn-121, Asn-158, Asn-168, Asn-213, Asn-275, Asn-343, Asn-386, Asn-457, Asn-487, Asn-511, Asn-539, Asn-563, and Asn-580. Residues 34–584 (SCDEDINLIR…TNYCWNGTID (551 aa)) enclose the PLA2c domain.

This sequence belongs to the lysophospholipase family.

The protein localises to the secreted. The enzyme catalyses a 1-acyl-sn-glycero-3-phosphocholine + H2O = sn-glycerol 3-phosphocholine + a fatty acid + H(+). Its function is as follows. Catalyzes the release of fatty acids from lysophospholipids. This chain is Lysophospholipase, found in Torulaspora delbrueckii (Yeast).